Here is a 643-residue protein sequence, read N- to C-terminus: Threonine--tRNA ligase (643 aa).

The region spanning 3 to 64 (DMINITFPDG…QEDGAVEIIT (62 aa)) is the TGS domain. The segment at 245–542 (DHRKLGKELK…LIEEHKGALP (298 aa)) is catalytic. Residues cysteine 338, histidine 389, and histidine 519 each coordinate Zn(2+).

Belongs to the class-II aminoacyl-tRNA synthetase family. Homodimer. Zn(2+) serves as cofactor.

The protein resides in the cytoplasm. The catalysed reaction is tRNA(Thr) + L-threonine + ATP = L-threonyl-tRNA(Thr) + AMP + diphosphate + H(+). Functionally, catalyzes the attachment of threonine to tRNA(Thr) in a two-step reaction: L-threonine is first activated by ATP to form Thr-AMP and then transferred to the acceptor end of tRNA(Thr). Also edits incorrectly charged L-seryl-tRNA(Thr). The polypeptide is Threonine--tRNA ligase (Bacillus velezensis (strain DSM 23117 / BGSC 10A6 / LMG 26770 / FZB42) (Bacillus amyloliquefaciens subsp. plantarum)).